Consider the following 258-residue polypeptide: Acyl-[acyl-carrier-protein]--UDP-N-acetylglucosamine O-acyltransferase (258 aa).

It belongs to the transferase hexapeptide repeat family. LpxA subfamily. Homotrimer.

Its subcellular location is the cytoplasm. It carries out the reaction a (3R)-hydroxyacyl-[ACP] + UDP-N-acetyl-alpha-D-glucosamine = a UDP-3-O-[(3R)-3-hydroxyacyl]-N-acetyl-alpha-D-glucosamine + holo-[ACP]. Its pathway is glycolipid biosynthesis; lipid IV(A) biosynthesis; lipid IV(A) from (3R)-3-hydroxytetradecanoyl-[acyl-carrier-protein] and UDP-N-acetyl-alpha-D-glucosamine: step 1/6. Functionally, involved in the biosynthesis of lipid A, a phosphorylated glycolipid that anchors the lipopolysaccharide to the outer membrane of the cell. The sequence is that of Acyl-[acyl-carrier-protein]--UDP-N-acetylglucosamine O-acyltransferase from Pseudomonas entomophila (strain L48).